Consider the following 351-residue polypeptide: Heat-inducible transcription repressor HrcA (351 aa).

The protein belongs to the HrcA family.

Its function is as follows. Negative regulator of class I heat shock genes (grpE-dnaK-dnaJ and groELS operons). Prevents heat-shock induction of these operons. The sequence is that of Heat-inducible transcription repressor HrcA from Mycoplasma pneumoniae (strain ATCC 29342 / M129 / Subtype 1) (Mycoplasmoides pneumoniae).